The sequence spans 1161 residues: Lethal(2) giant larvae protein (1161 aa).

A phospho-regulated basic and hydrophobic (PRBH) motif region spans residues 15–86; that stretch reads DRHRLQKDLF…NNSASELNVQ (72 aa). WD repeat units follow at residues 39-72, 82-128, 131-167, 189-223, 231-263, 278-320, 328-358, and 380-464; these read SALA…LYGQ, ELNV…DGKL, VSSL…EPVI, SIRQ…QRAY, SVGL…PEPP, SINR…GHKV, VIDF…AYDL, and TCNY…YNFK. Phosphoserine is present on residues Ser-473 and Ser-484. WD repeat units lie at residues 513–594 and 603–664; these read KKIA…SGVL and TCMA…LRES. Phosphoserine is present on Ser-679. WD repeat units lie at residues 708-778, 787-832, 837-927, and 941-964; these read VRCL…KEIQ, GISI…LKPI, LTAN…LNAA, and CFTN…ALAT. Phosphoserine occurs at positions 808, 869, 876, 887, 889, and 893. Ser-1013 bears the Phosphoserine mark. The segment at 1141-1161 is disordered; sequence EKTNGDNKIGTPKTAPEESQF.

Belongs to the WD repeat L(2)GL family. As to quaternary structure, may form multimeric complexes. Interacts with mahj. Interacts with aPKC; leading to phosphorylation. Interacts with ball. In terms of processing, phosphorylated by aPKC which lowers lipid affinity and promotes dissociation from the cell cortex. In developing oocytes, aPKC-mediated phosphorylation restricts activity to the oocyte posterior and is required for oocyte polarity formation. In terms of tissue distribution, expressed in the epithelial cells of the digestive tract and in gonads.

The protein localises to the cytoplasm. It is found in the cell cortex. Functionally, essential for the development of polarized epithelia, for cell polarity associated with asymmetric cell division of neuroblasts during development, and for oocyte polarity formation. Promotes the formation of actin-rich projections at the oocyte cortex and the posterior enrichment of par-1 which is required for oocyte polarization. Regulates the localization of axis-specifying morphogens such as stau and grk. Has an essential role in control of cell proliferation and differentiation during development and could act as a tumor suppressor. Its function is as follows. Has an accessory function in control of cell proliferation and differentiation during development. This Drosophila melanogaster (Fruit fly) protein is Lethal(2) giant larvae protein (l(2)gl).